The following is a 469-amino-acid chain: Ribulose bisphosphate carboxylase large chain (469 aa).

K5 bears the N6,N6,N6-trimethyllysine mark. 2 residues coordinate substrate: N114 and T164. Residue K166 is the Proton acceptor of the active site. Position 168 (K168) interacts with substrate. Mg(2+)-binding residues include K192, D194, and E195. K192 is subject to N6-carboxylysine. The active-site Proton acceptor is H285. Residues R286, H318, and S370 each coordinate substrate.

Belongs to the RuBisCO large chain family. Type I subfamily. As to quaternary structure, heterohexadecamer of 8 large chains and 8 small chains; disulfide-linked. The disulfide link is formed within the large subunit homodimers. Requires Mg(2+) as cofactor. Post-translationally, the disulfide bond which can form in the large chain dimeric partners within the hexadecamer appears to be associated with oxidative stress and protein turnover.

The protein resides in the plastid. It is found in the chloroplast. It catalyses the reaction 2 (2R)-3-phosphoglycerate + 2 H(+) = D-ribulose 1,5-bisphosphate + CO2 + H2O. The catalysed reaction is D-ribulose 1,5-bisphosphate + O2 = 2-phosphoglycolate + (2R)-3-phosphoglycerate + 2 H(+). Functionally, ruBisCO catalyzes two reactions: the carboxylation of D-ribulose 1,5-bisphosphate, the primary event in carbon dioxide fixation, as well as the oxidative fragmentation of the pentose substrate in the photorespiration process. Both reactions occur simultaneously and in competition at the same active site. This is Ribulose bisphosphate carboxylase large chain from Fleroya rubrostipulata (Mitragyna rubrostipulata).